A 31-amino-acid polypeptide reads, in one-letter code: Maltose/maltodextrin import ATP-binding protein MalK (31 aa).

This sequence belongs to the ABC transporter superfamily. Maltooligosaccharide importer (TC 3.A.1.1.1) family. The complex is composed of two ATP-binding proteins (MalK), two transmembrane proteins (MalG and MalK) and a solute-binding protein (MalE).

The protein localises to the cell inner membrane. It carries out the reaction D-maltose(out) + ATP + H2O = D-maltose(in) + ADP + phosphate + H(+). Functionally, part of the ABC transporter complex MalEFGK involved in maltose/maltodextrin import. Responsible for energy coupling to the transport system. In Photorhabdus luminescens (Xenorhabdus luminescens), this protein is Maltose/maltodextrin import ATP-binding protein MalK.